Here is a 651-residue protein sequence, read N- to C-terminus: Acetyl-coenzyme A synthetase (651 aa).

CoA is bound by residues R189 to K192, T311, and N335. ATP is bound by residues G387–P389, D411–T416, D500, and R515. Position 523 (S523) interacts with CoA. An ATP-binding site is contributed by R526. Mg(2+) is bound by residues V537, H539, and V542. CoA is bound at residue R584. At K609 the chain carries N6-acetyllysine.

This sequence belongs to the ATP-dependent AMP-binding enzyme family. Mg(2+) is required as a cofactor. In terms of processing, acetylated. Deacetylation by the SIR2-homolog deacetylase activates the enzyme.

It catalyses the reaction acetate + ATP + CoA = acetyl-CoA + AMP + diphosphate. Functionally, catalyzes the conversion of acetate into acetyl-CoA (AcCoA), an essential intermediate at the junction of anabolic and catabolic pathways. AcsA undergoes a two-step reaction. In the first half reaction, AcsA combines acetate with ATP to form acetyl-adenylate (AcAMP) intermediate. In the second half reaction, it can then transfer the acetyl group from AcAMP to the sulfhydryl group of CoA, forming the product AcCoA. This Rhizobium etli (strain CIAT 652) protein is Acetyl-coenzyme A synthetase.